The following is a 428-amino-acid chain: Trigger factor (428 aa).

The region spanning 163–248 is the PPIase FKBP-type domain; the sequence is GDTAVIDFEG…IKEIKVKELP (86 aa).

The protein belongs to the FKBP-type PPIase family. Tig subfamily.

The protein resides in the cytoplasm. The catalysed reaction is [protein]-peptidylproline (omega=180) = [protein]-peptidylproline (omega=0). Involved in protein export. Acts as a chaperone by maintaining the newly synthesized protein in an open conformation. Functions as a peptidyl-prolyl cis-trans isomerase. The protein is Trigger factor of Ruminiclostridium cellulolyticum (strain ATCC 35319 / DSM 5812 / JCM 6584 / H10) (Clostridium cellulolyticum).